A 573-amino-acid polypeptide reads, in one-letter code: Sulfite reductase [NADPH] hemoprotein beta-component (573 aa).

4 residues coordinate [4Fe-4S] cluster: cysteine 438, cysteine 444, cysteine 483, and cysteine 487. Cysteine 487 lines the siroheme pocket.

Belongs to the nitrite and sulfite reductase 4Fe-4S domain family. In terms of assembly, alpha(8)-beta(8). The alpha component is a flavoprotein, the beta component is a hemoprotein. The cofactor is siroheme. [4Fe-4S] cluster serves as cofactor.

The enzyme catalyses hydrogen sulfide + 3 NADP(+) + 3 H2O = sulfite + 3 NADPH + 4 H(+). The protein operates within sulfur metabolism; hydrogen sulfide biosynthesis; hydrogen sulfide from sulfite (NADPH route): step 1/1. Component of the sulfite reductase complex that catalyzes the 6-electron reduction of sulfite to sulfide. This is one of several activities required for the biosynthesis of L-cysteine from sulfate. In Nitrosomonas eutropha (strain DSM 101675 / C91 / Nm57), this protein is Sulfite reductase [NADPH] hemoprotein beta-component.